The primary structure comprises 283 residues: Glutamate racemase (283 aa).

Substrate is bound by residues 28 to 29 (DS) and 60 to 61 (YG). Cys92 acts as the Proton donor/acceptor in catalysis. 93-94 (NT) contributes to the substrate binding site. The active-site Proton donor/acceptor is the Cys204. 205–206 (TH) contacts substrate.

This sequence belongs to the aspartate/glutamate racemases family.

It catalyses the reaction L-glutamate = D-glutamate. Its pathway is cell wall biogenesis; peptidoglycan biosynthesis. Its function is as follows. Provides the (R)-glutamate required for cell wall biosynthesis. The sequence is that of Glutamate racemase from Salmonella enteritidis PT4 (strain P125109).